A 163-amino-acid polypeptide reads, in one-letter code: NADPH-dependent 7-cyano-7-deazaguanine reductase (163 aa).

The active-site Thioimide intermediate is Cys-54. The Proton donor role is filled by Asp-61. Substrate-binding positions include 76–78 (VES) and 95–96 (HE).

It belongs to the GTP cyclohydrolase I family. QueF type 1 subfamily.

Its subcellular location is the cytoplasm. The catalysed reaction is 7-aminomethyl-7-carbaguanine + 2 NADP(+) = 7-cyano-7-deazaguanine + 2 NADPH + 3 H(+). It functions in the pathway tRNA modification; tRNA-queuosine biosynthesis. In terms of biological role, catalyzes the NADPH-dependent reduction of 7-cyano-7-deazaguanine (preQ0) to 7-aminomethyl-7-deazaguanine (preQ1). The sequence is that of NADPH-dependent 7-cyano-7-deazaguanine reductase from Streptococcus thermophilus (strain CNRZ 1066).